Reading from the N-terminus, the 388-residue chain is Succinate--CoA ligase [ADP-forming] subunit beta (388 aa).

The ATP-grasp domain occupies 9–244; sequence KEILRKYGVT…LDEEDPAEIE (236 aa). Residues K46, 53–55, E99, A102, and E107 contribute to the ATP site; that span reads GRG. Mg(2+) is bound by residues N199 and D213. Substrate contacts are provided by residues N264 and 321 to 323; that span reads GIM.

It belongs to the succinate/malate CoA ligase beta subunit family. Heterotetramer of two alpha and two beta subunits. Mg(2+) is required as a cofactor.

The catalysed reaction is succinate + ATP + CoA = succinyl-CoA + ADP + phosphate. It catalyses the reaction GTP + succinate + CoA = succinyl-CoA + GDP + phosphate. Its pathway is carbohydrate metabolism; tricarboxylic acid cycle; succinate from succinyl-CoA (ligase route): step 1/1. Succinyl-CoA synthetase functions in the citric acid cycle (TCA), coupling the hydrolysis of succinyl-CoA to the synthesis of either ATP or GTP and thus represents the only step of substrate-level phosphorylation in the TCA. The beta subunit provides nucleotide specificity of the enzyme and binds the substrate succinate, while the binding sites for coenzyme A and phosphate are found in the alpha subunit. This is Succinate--CoA ligase [ADP-forming] subunit beta from Herminiimonas arsenicoxydans.